We begin with the raw amino-acid sequence, 611 residues long: uncharacterized protein (611 aa).

One can recognise an SAC domain in the interval 51-351; the sequence is LYGFIRLKIY…DYHKQGSRNL (301 aa).

It to yeast RSD1 and S.pombe SpBC19F5.03.

This is an uncharacterized protein from Schizosaccharomyces pombe (strain 972 / ATCC 24843) (Fission yeast).